Consider the following 128-residue polypeptide: Gastrotropin (128 aa).

N-acetylalanine is present on alanine 2.

It belongs to the calycin superfamily. Fatty-acid binding protein (FABP) family. In terms of tissue distribution, found exclusively in the ileum and to a lesser extent in distal jejunum.

It localises to the cytoplasm. Its subcellular location is the membrane. Functionally, binds to bile acids and is involved in enterohepatic bile acid metabolism. Required for efficient apical to basolateral transport of conjugated bile acids in ileal enterocytes. Stimulates gastric acid and pepsinogen secretion. This is Gastrotropin (FABP6) from Sus scrofa (Pig).